The sequence spans 510 residues: NAD(P)H-quinone oxidoreductase subunit 2 A, chloroplastic (510 aa).

13 consecutive transmembrane segments (helical) span residues 24-44, 57-77, 99-119, 124-144, 149-169, 183-203, 227-247, 295-315, 323-343, 354-374, 395-415, 418-438, and 484-504; these read LLLF…GLIL, IPWL…ALLF, IFQF…VEYI, MALT…MFLC, LITI…LSGY, YLLM…WLYG, PGIS…LSPA, WHLL…LIAI, MLAY…IVGD, YMLF…LFGL, ALSL…AGFF, IYLF…IGLL, and MIVC…IITI.

Belongs to the complex I subunit 2 family. In terms of assembly, NDH is composed of at least 16 different subunits, 5 of which are encoded in the nucleus.

It localises to the plastid. It is found in the chloroplast thylakoid membrane. The enzyme catalyses a plastoquinone + NADH + (n+1) H(+)(in) = a plastoquinol + NAD(+) + n H(+)(out). The catalysed reaction is a plastoquinone + NADPH + (n+1) H(+)(in) = a plastoquinol + NADP(+) + n H(+)(out). In terms of biological role, NDH shuttles electrons from NAD(P)H:plastoquinone, via FMN and iron-sulfur (Fe-S) centers, to quinones in the photosynthetic chain and possibly in a chloroplast respiratory chain. The immediate electron acceptor for the enzyme in this species is believed to be plastoquinone. Couples the redox reaction to proton translocation, and thus conserves the redox energy in a proton gradient. The chain is NAD(P)H-quinone oxidoreductase subunit 2 A, chloroplastic from Spinacia oleracea (Spinach).